A 283-amino-acid chain; its full sequence is Nickel/cobalt efflux system RcnA (283 aa).

Over 1 to 5 (MGEFS) the chain is Periplasmic. The chain crosses the membrane as a helical span at residues 6 to 26 (ILLQQGNGWFFIPSAILLGIL). The Cytoplasmic portion of the chain corresponds to 27–51 (HGLEPGHSKTMMAAFIIAIKGTIKQ). The chain crosses the membrane as a helical span at residues 52–72 (AFMLGLAATLSHTAVVWLIAL). Topologically, residues 73 to 85 (GGMYLSRAYAAES) are periplasmic. The helical transmembrane segment at 86-106 (VEPWLQLISAIIILGTACWMF) threads the bilayer. The Cytoplasmic segment spans residues 107 to 183 (WRTWRGEQQW…FHGQKVTNEQ (77 aa)). Positions 120–148 (SHHDHDHDHDHDHDHDHDHDHDHDHHGHT) are enriched in basic and acidic residues. Residues 120–149 (SHHDHDHDHDHDHDHDHDHDHDHDHHGHTY) form a disordered region. Residues 184 to 204 (ILLFGLTGGLIPCPAAITLLL) traverse the membrane as a helical segment. At 205 to 218 (ICIQLQALTLGATM) the chain is on the periplasmic side. Residues 219-239 (VLCFSLGLALTLVAVGVGAAI) traverse the membrane as a helical segment. Residues 240–260 (SVQQAVKRWNGFTTLARRAPY) are Cytoplasmic-facing. A helical membrane pass occupies residues 261-281 (FSSILIGLVGLYMGIHGYTGI). The Periplasmic portion of the chain corresponds to 282–283 (MQ).

This sequence belongs to the NiCoT transporter (TC 2.A.52) family. RcnA subfamily.

The protein resides in the cell inner membrane. Its function is as follows. Efflux system for nickel and cobalt. This Salmonella arizonae (strain ATCC BAA-731 / CDC346-86 / RSK2980) protein is Nickel/cobalt efflux system RcnA (rcnA).